Reading from the N-terminus, the 226-residue chain is 7-cyano-7-deazaguanine synthase (226 aa).

9-19 (YSGGLDSTTCL) is an ATP binding site. Residues Cys-189, Cys-199, Cys-202, and Cys-205 each contribute to the Zn(2+) site.

Belongs to the QueC family. The cofactor is Zn(2+).

It catalyses the reaction 7-carboxy-7-deazaguanine + NH4(+) + ATP = 7-cyano-7-deazaguanine + ADP + phosphate + H2O + H(+). It functions in the pathway purine metabolism; 7-cyano-7-deazaguanine biosynthesis. Functionally, catalyzes the ATP-dependent conversion of 7-carboxy-7-deazaguanine (CDG) to 7-cyano-7-deazaguanine (preQ(0)). In Pelobacter propionicus (strain DSM 2379 / NBRC 103807 / OttBd1), this protein is 7-cyano-7-deazaguanine synthase.